Reading from the N-terminus, the 69-residue chain is Pleurain-A1 (69 aa).

The first 18 residues, 1-18 (MFTLKKTLLLLFFLGTIS), serve as a signal peptide directing secretion. Residues 19–43 (ISLCKQERDADEDDGRKMTEEEVKR) constitute a propeptide that is removed on maturation. The cysteines at positions 63 and 69 are disulfide-linked.

In terms of tissue distribution, expressed by the skin glands.

The protein localises to the secreted. Its function is as follows. Antimicrobial peptide. Has activity against the Gram-positive bacterium S.aureus ATCC2592 (MIC=15 ug/ml), the Gram-negative bacteria E.coli ATCC25922 (MIC=60 ug/ml), B.dysenteriae (MIC=120 ug/ml), H.pylori NTCT11637 (MIC=30 ug/ml), and the fungus C.albicans ATCC2002 (MIC=30 ug/ml). Has little hemolytic activity on rabbit red blood cells. This chain is Pleurain-A1, found in Nidirana pleuraden (Yunnan pond frog).